Consider the following 927-residue polypeptide: Small conductance calcium-activated potassium channel protein (927 aa).

A compositionally biased stretch (polar residues) spans 1–31; sequence MSIQKLNDTTNSGYVSSEETDSLLVSSSNPS. Disordered stretches follow at residues 1-131, 181-251, and 296-336; these read MSIQ…EDVE, LSLK…VKSA, and HLHQ…SSST. Residues 45–62 show a composition bias toward low complexity; that stretch reads SNSTNGPTTGASTSSSGS. The span at 63–77 shows a compositional bias: gly residues; it reads VSGGGGGSGSGGGSA. Composition is skewed to polar residues over residues 95–107 and 200–214; these read TSTY…QSQH and NLGT…SSIP. Composition is skewed to low complexity over residues 219 to 232 and 296 to 308; these read SRCR…RRAS and HLHQ…SQQQ. The segment covering 314–336 has biased composition (polar residues); sequence ITSSPTNGSRIIRQSSQPESSST. The chain crosses the membrane as a helical span at residues 489 to 509; that stretch reads ALVMGMFGIIVMVIENELSSA. A helical transmembrane segment spans residues 530 to 550; the sequence is TVILLGLIVAYHALEVQLFMI. The chain crosses the membrane as a helical span at residues 569 to 589; it reads IGLELFICAIHPIPGEYYFQW. The chain crosses the membrane as a helical span at residues 609-629; sequence VALSLPMFLRLYLICRVMLLH. The chain crosses the membrane as a helical span at residues 658-678; the sequence is LMTICPGTVLLVFMVSLWIIA. The pore-forming intramembrane region spans 696 to 716; that stretch reads LLNSMWLTAITFLCVGYGDIV. A helical transmembrane segment spans residues 724 to 744; that stretch reads GITLTCGMVGAGCTALLVAVV. The calmodulin-binding stretch occupies residues 763-839; that stretch reads DTQLTKRLKN…ITDMAKTQNT (77 aa).

The protein belongs to the potassium channel KCNN family. SK subfamily. In terms of assembly, heterooligomer. The complex is composed of 4 channel subunits each of which binds to a calmodulin subunit which regulates the channel activity through calcium-binding.

It localises to the membrane. In terms of biological role, forms a voltage-independent potassium channel activated by intracellular calcium. Activation is followed by membrane hyperpolarization. Thought to regulate neuronal excitability by contributing to the slow component of synaptic afterhyperpolarization. The channel is blocked by apamin. This chain is Small conductance calcium-activated potassium channel protein, found in Drosophila melanogaster (Fruit fly).